An 85-amino-acid polypeptide reads, in one-letter code: Small ribosomal subunit protein bS18 (85 aa).

The protein belongs to the bacterial ribosomal protein bS18 family. As to quaternary structure, part of the 30S ribosomal subunit. Forms a tight heterodimer with protein bS6.

Its function is as follows. Binds as a heterodimer with protein bS6 to the central domain of the 16S rRNA, where it helps stabilize the platform of the 30S subunit. The polypeptide is Small ribosomal subunit protein bS18 (Hyphomonas neptunium (strain ATCC 15444)).